Here is a 130-residue protein sequence, read N- to C-terminus: Protachykinin-1 (130 aa).

Residues 1–19 form the signal peptide; it reads MKILVAVAVFFLVSTQLFA. Residues 20 to 56 constitute a propeptide that is removed on maturation; the sequence is EEIDANDDLNYWSDWSDSDQIKEAMPEPFEHLLQRIA. Met-68 and Met-107 each carry methionine amide.

This sequence belongs to the tachykinin family. The substance P form is cleaved at Pro-59 by the prolyl endopeptidase FAP (seprase) activity (in vitro). Substance P is also cleaved and degraded by Angiotensin-converting enzyme (ACE) and neprilysin (MME).

The protein localises to the secreted. Tachykinins are active peptides which excite neurons, evoke behavioral responses, are potent vasodilators and secretagogues, and contract (directly or indirectly) many smooth muscles. The polypeptide is Protachykinin-1 (Tac1) (Mus musculus (Mouse)).